The primary structure comprises 24 residues: Brevinin-1HSa (24 aa).

The cysteines at positions 18 and 24 are disulfide-linked.

Expressed by the skin glands.

The protein resides in the secreted. Its function is as follows. Has antibacterial activity against the Gram-positive bacterium S.aureus ATCC 25923 (MIC=3 uM) and the Gram-negative bacterium E.coli ATCC 25726 (MIC=24 uM). In Odorrana hosii (Hose's rock frog), this protein is Brevinin-1HSa.